A 1382-amino-acid polypeptide reads, in one-letter code: DNA-directed RNA polymerase subunit beta'' (1382 aa).

Residues Cys224, Cys294, Cys301, and Cys304 each contribute to the Zn(2+) site.

This sequence belongs to the RNA polymerase beta' chain family. RpoC2 subfamily. In terms of assembly, in plastids the minimal PEP RNA polymerase catalytic core is composed of four subunits: alpha, beta, beta', and beta''. When a (nuclear-encoded) sigma factor is associated with the core the holoenzyme is formed, which can initiate transcription. The cofactor is Zn(2+).

The protein localises to the plastid. Its subcellular location is the chloroplast. It carries out the reaction RNA(n) + a ribonucleoside 5'-triphosphate = RNA(n+1) + diphosphate. DNA-dependent RNA polymerase catalyzes the transcription of DNA into RNA using the four ribonucleoside triphosphates as substrates. This chain is DNA-directed RNA polymerase subunit beta'', found in Liriodendron tulipifera (Tuliptree).